Consider the following 323-residue polypeptide: Probable cell division protein WhiA (323 aa).

The H-T-H motif DNA-binding region spans 275-309 (TLKELGEMLTTGQVSKSGINHRLRKLDQIAERLRS).

The protein belongs to the WhiA family.

Its function is as follows. Involved in cell division and chromosome segregation. The protein is Probable cell division protein WhiA of Listeria monocytogenes serotype 4b (strain CLIP80459).